We begin with the raw amino-acid sequence, 336 residues long: tRNA N6-adenosine threonylcarbamoyltransferase (336 aa).

The Fe cation site is built by H112 and H116. Substrate is bound by residues 136-140 (LVSGG), D169, G182, and N276. D304 serves as a coordination point for Fe cation.

It belongs to the KAE1 / TsaD family. Fe(2+) serves as cofactor.

It localises to the cytoplasm. It carries out the reaction L-threonylcarbamoyladenylate + adenosine(37) in tRNA = N(6)-L-threonylcarbamoyladenosine(37) in tRNA + AMP + H(+). Required for the formation of a threonylcarbamoyl group on adenosine at position 37 (t(6)A37) in tRNAs that read codons beginning with adenine. Is involved in the transfer of the threonylcarbamoyl moiety of threonylcarbamoyl-AMP (TC-AMP) to the N6 group of A37, together with TsaE and TsaB. TsaD likely plays a direct catalytic role in this reaction. This is tRNA N6-adenosine threonylcarbamoyltransferase from Francisella tularensis subsp. holarctica (strain LVS).